A 100-amino-acid polypeptide reads, in one-letter code: Small ribosomal subunit protein uS14c (100 aa).

The segment at 1–22 (MARKGLIQRENKRQKLEQKYHS) is disordered. The span at 7–20 (IQRENKRQKLEQKY) shows a compositional bias: basic and acidic residues.

It belongs to the universal ribosomal protein uS14 family. Part of the 30S ribosomal subunit.

It localises to the plastid. The protein localises to the chloroplast. Its function is as follows. Binds 16S rRNA, required for the assembly of 30S particles. In Daucus carota (Wild carrot), this protein is Small ribosomal subunit protein uS14c.